The following is a 118-amino-acid chain: NADH-ubiquinone oxidoreductase chain 3 (118 aa).

A run of 2 helical transmembrane segments spans residues 7-27 and 87-107; these read ICIY…LPFL and IDPF…IGSL.

Belongs to the complex I subunit 3 family.

Its subcellular location is the mitochondrion membrane. It catalyses the reaction a ubiquinone + NADH + 5 H(+)(in) = a ubiquinol + NAD(+) + 4 H(+)(out). Functionally, core subunit of the mitochondrial membrane respiratory chain NADH dehydrogenase (Complex I) that is believed to belong to the minimal assembly required for catalysis. Complex I functions in the transfer of electrons from NADH to the respiratory chain. The immediate electron acceptor for the enzyme is believed to be ubiquinone. The polypeptide is NADH-ubiquinone oxidoreductase chain 3 (ND3) (Solanum tuberosum (Potato)).